We begin with the raw amino-acid sequence, 251 residues long: Protein DEEPER ROOTING 1 (251 aa).

An IGT motif motif is present at residues 46 to 52; that stretch reads SLLAIGT. Positions 64–105 form a coiled coil; that stretch reads VENSSDNVQSVQDTVKFTEEEVDKIRKEFETLLAIKDQAEAQ.

It belongs to the LAZY family.

Involved in the control of root growth angle. Involved in cell elongation in the root tip that causes asymmetric root growth and downward bending of the root in response to gravity. This is Protein DEEPER ROOTING 1 from Oryza sativa subsp. japonica (Rice).